Consider the following 253-residue polypeptide: Cholesterol ring-cleaving hydrolase IpdB subunit (253 aa).

This sequence belongs to the 3-oxoacid CoA-transferase subunit B family. As to quaternary structure, heterotetramer composed of 2 IpdA subunits and 2 IpdB subunits.

It carries out the reaction (3E)-2-(2-carboxylatoethyl)-3-methyl-6-oxocyclohex-1-ene-1-carboxyl-CoA + H2O = 6-methyl-3,7-dioxodecanedioyl-CoA. Its pathway is steroid metabolism; cholesterol degradation. In terms of biological role, involved in the final steps of cholesterol and steroid degradation. Opens the last steroid ring of cholesterol by catalyzing the hydrolysis of (3E)-2-(2-carboxylatoethyl)-3-methyl-6-oxocyclohex-1-ene-1-carboxyl-CoA (COCHEA-CoA) to 6-methyl-3,7-dioxodecanedioyl-CoA (MeDODA-CoA). The sequence is that of Cholesterol ring-cleaving hydrolase IpdB subunit from Rhodococcus jostii (strain RHA1).